A 512-amino-acid chain; its full sequence is Sucrose-6-phosphate hydrolase (512 aa).

Substrate contacts are provided by residues 40 to 43 (WMND), glutamine 59, tryptophan 67, 102 to 103 (FS), 165 to 166 (RD), glutamate 229, and tryptophan 311. The active site involves aspartate 43.

The protein belongs to the glycosyl hydrolase 32 family.

It is found in the cytoplasm. It catalyses the reaction Hydrolysis of terminal non-reducing beta-D-fructofuranoside residues in beta-D-fructofuranosides.. Its pathway is glycan biosynthesis; sucrose metabolism. The protein is Sucrose-6-phosphate hydrolase (sacA) of Zymomonas mobilis subsp. mobilis (strain ATCC 10988 / DSM 424 / LMG 404 / NCIMB 8938 / NRRL B-806 / ZM1).